Reading from the N-terminus, the 494-residue chain is Nuclear distribution protein PAC1 (494 aa).

The LisH domain occupies 14–46 (QKNELDKSVLRYLNWNYKQTVRHEHAQDYESVR). A coiled-coil region spans residues 90-123 (NSIVRLQKKIIELEQNTETLVSQIKDLNTQVSEL). WD repeat units lie at residues 153–192 (NVES…IPLA), 196–244 (SHTK…CKFQ), 251–292 (GHEH…SLKT), 295–334 (PHSQ…SVGT), 347–395 (HFIE…LMAH), 415–454 (GHLS…HVWE), and 457–492 (HTGF…SNVF).

The protein belongs to the WD repeat LIS1/nudF family. Self-associates. Interacts with NDL1 and dynein.

The protein resides in the cytoplasm. It localises to the cytoskeleton. The protein localises to the spindle pole. Functionally, positively regulates the activity of the minus-end directed microtubule motor protein dynein. Plays a central role in positioning the mitotic spindle at the bud neck during cell division. Targets cytoplasmic dynein to microtubule plus ends, thereby promoting dynein-mediated microtubule sliding along the bud cortex and consequently the movement of the mitotic spindle to the bud neck. The polypeptide is Nuclear distribution protein PAC1 (Saccharomyces cerevisiae (strain YJM789) (Baker's yeast)).